We begin with the raw amino-acid sequence, 269 residues long: Chromophore lyase CRL, chloroplastic (269 aa).

Residues 19-36 (ARGLVVKTLVLIGGALLI) form a helical membrane-spanning segment.

It belongs to the CpcT/CpeT biliprotein lyase family. As to expression, mostly expressed in shoot apices, to a lower extent, in leaves, inflorescence stems, buds and cotyledons, and, at low levels, in roots and siliques.

Its subcellular location is the plastid. The protein resides in the chloroplast outer membrane. Its function is as follows. Covalently attaches a chromophore to Cys residue(s) of phycobiliproteins. Required for plastid division, and involved in cell differentiation and regulation of the cell division plane. Maintenance of plastid homeostasis controls plant preconditioning to stress and stress acclimation. Functionally, confers sensitivity to cabbage leaf curl virus (CaLCuV), probably by supporting viral movement. This is Chromophore lyase CRL, chloroplastic (CRL) from Arabidopsis thaliana (Mouse-ear cress).